The sequence spans 118 residues: Large ribosomal subunit protein bL12 (118 aa).

At M1 the chain carries N-acetylmethionine; in form MA2.

Belongs to the bacterial ribosomal protein bL12 family. As to quaternary structure, homodimer. Part of the ribosomal stalk of the 50S ribosomal subunit. Forms a multimeric L10(L12)X complex, where L10 forms an elongated spine to which 2 to 4 L12 dimers bind in a sequential fashion. Binds GTP-bound translation factors. Post-translationally, acetylation of Met-1 converts MA1 to MA2.

Functionally, forms part of the ribosomal stalk which helps the ribosome interact with GTP-bound translation factors. Is thus essential for accurate translation. In Micrococcus luteus (Micrococcus lysodeikticus), this protein is Large ribosomal subunit protein bL12.